Here is a 192-residue protein sequence, read N- to C-terminus: Casparian strip membrane protein 2 (192 aa).

The Cytoplasmic portion of the chain corresponds to 1–31 (MTKDVVVEHGESSKAPLVAAPAASGVGRAAS). Residues 32–52 (VADVFLRFLAIVGTIASAISM) form a helical membrane-spanning segment. The Extracellular segment spans residues 53-79 (GTTNETLPFFTQFIQFEAKYSDLPSFT). Asparagine 56 is a glycosylation site (N-linked (GlcNAc...) asparagine). The chain crosses the membrane as a helical span at residues 80-100 (FFVAANAVVCTYLVLSIPLSI). Topologically, residues 101 to 112 (VHIVRPRARYSR) are cytoplasmic. The helical transmembrane segment at 113–133 (LVLVFFDAAMLTLLTAGASAA) threads the bilayer. Topologically, residues 134 to 166 (AAIVYLAHKGNVRANWFAICQQFDSFCERISGS) are extracellular. A helical transmembrane segment spans residues 167–187 (LIGSFAAMVLLIMLIFLSAFA). The Cytoplasmic portion of the chain corresponds to 188–192 (LARRH).

It belongs to the Casparian strip membrane proteins (CASP) family. As to quaternary structure, homodimer and heterodimers.

It is found in the cell membrane. Its function is as follows. Regulates membrane-cell wall junctions and localized cell wall deposition. Required for establishment of the Casparian strip membrane domain (CSD) and the subsequent formation of Casparian strips, a cell wall modification of the root endodermis that determines an apoplastic barrier between the intraorganismal apoplasm and the extraorganismal apoplasm and prevents lateral diffusion. This chain is Casparian strip membrane protein 2, found in Panicum virgatum (Blackwell switchgrass).